Consider the following 257-residue polypeptide: MLAKRLVPCLDVKDGKVVKGVQFRNHEIVGDIVPLAARYAEEGADELVFYDITASAHERVVDKSWVSRVAEQIDIPFCVAGGIKTISQARELLAFGADKISINSPALTDPSLISRLQDEFGRQCIVIGIDSFFDATSNSYKVKQFTGDEAATKDTQWFTQDWVEEVQKRGCGEIVLNVMNQDGVRGGYDIKQLSLVRAICDVPLIASGGAGTMAHFRDVFIEAKVDAALAASVFHKAIINIGELKAYLAAEDIAIRR.

Active-site residues include aspartate 11 and aspartate 130.

The protein belongs to the HisA/HisF family. In terms of assembly, heterodimer of HisH and HisF.

It is found in the cytoplasm. It carries out the reaction 5-[(5-phospho-1-deoxy-D-ribulos-1-ylimino)methylamino]-1-(5-phospho-beta-D-ribosyl)imidazole-4-carboxamide + L-glutamine = D-erythro-1-(imidazol-4-yl)glycerol 3-phosphate + 5-amino-1-(5-phospho-beta-D-ribosyl)imidazole-4-carboxamide + L-glutamate + H(+). Its pathway is amino-acid biosynthesis; L-histidine biosynthesis; L-histidine from 5-phospho-alpha-D-ribose 1-diphosphate: step 5/9. IGPS catalyzes the conversion of PRFAR and glutamine to IGP, AICAR and glutamate. The HisF subunit catalyzes the cyclization activity that produces IGP and AICAR from PRFAR using the ammonia provided by the HisH subunit. The sequence is that of Imidazole glycerol phosphate synthase subunit HisF from Shewanella baltica (strain OS155 / ATCC BAA-1091).